Consider the following 592-residue polypeptide: Aspartate--tRNA(Asp/Asn) ligase (592 aa).

L-aspartate is bound at residue Glu182. The segment at 206 to 209 (QIFK) is aspartate. Arg228 is an L-aspartate binding site. Residues 228–230 (RDE) and Gln237 each bind ATP. L-aspartate is bound at residue His455. Residue Glu489 participates in ATP binding. Residue Arg496 participates in L-aspartate binding. 541-544 (GLDR) contacts ATP.

This sequence belongs to the class-II aminoacyl-tRNA synthetase family. Type 1 subfamily. In terms of assembly, homodimer.

The protein localises to the cytoplasm. The enzyme catalyses tRNA(Asx) + L-aspartate + ATP = L-aspartyl-tRNA(Asx) + AMP + diphosphate. Aspartyl-tRNA synthetase with relaxed tRNA specificity since it is able to aspartylate not only its cognate tRNA(Asp) but also tRNA(Asn). Reaction proceeds in two steps: L-aspartate is first activated by ATP to form Asp-AMP and then transferred to the acceptor end of tRNA(Asp/Asn). The chain is Aspartate--tRNA(Asp/Asn) ligase from Caldanaerobacter subterraneus subsp. tengcongensis (strain DSM 15242 / JCM 11007 / NBRC 100824 / MB4) (Thermoanaerobacter tengcongensis).